Consider the following 194-residue polypeptide: Alkyl hydroperoxide reductase AhpD (194 aa).

The active-site Proton donor is cysteine 132. A disulfide bridge connects residues cysteine 132 and cysteine 135. Cysteine 135 serves as the catalytic Cysteine sulfenic acid (-SOH) intermediate.

This sequence belongs to the AhpD family.

It carries out the reaction N(6)-[(R)-dihydrolipoyl]-L-lysyl-[lipoyl-carrier protein] + a hydroperoxide = N(6)-[(R)-lipoyl]-L-lysyl-[lipoyl-carrier protein] + an alcohol + H2O. Antioxidant protein with alkyl hydroperoxidase activity. Required for the reduction of the AhpC active site cysteine residues and for the regeneration of the AhpC enzyme activity. This chain is Alkyl hydroperoxide reductase AhpD, found in Koribacter versatilis (strain Ellin345).